The sequence spans 431 residues: Tol-Pal system protein TolB (431 aa).

The signal sequence occupies residues 1–18; sequence MKALLLSLLLLLPVVALA. The interval 410-431 is disordered; that stretch reads LPLRTEKGTYQTPDWSPLPQAQ.

Belongs to the TolB family. As to quaternary structure, the Tol-Pal system is composed of five core proteins: the inner membrane proteins TolA, TolQ and TolR, the periplasmic protein TolB and the outer membrane protein Pal. They form a network linking the inner and outer membranes and the peptidoglycan layer.

The protein localises to the periplasm. Part of the Tol-Pal system, which plays a role in outer membrane invagination during cell division and is important for maintaining outer membrane integrity. This Myxococcus xanthus protein is Tol-Pal system protein TolB.